The sequence spans 415 residues: Serine hydroxymethyltransferase 2 (415 aa).

(6S)-5,6,7,8-tetrahydrofolate-binding positions include L122 and 126 to 128 (GHL). K230 is modified (N6-(pyridoxal phosphate)lysine).

The protein belongs to the SHMT family. Homodimer. The cofactor is pyridoxal 5'-phosphate.

The protein resides in the cytoplasm. The catalysed reaction is (6R)-5,10-methylene-5,6,7,8-tetrahydrofolate + glycine + H2O = (6S)-5,6,7,8-tetrahydrofolate + L-serine. It functions in the pathway one-carbon metabolism; tetrahydrofolate interconversion. Its pathway is amino-acid biosynthesis; glycine biosynthesis; glycine from L-serine: step 1/1. Catalyzes the reversible interconversion of serine and glycine with tetrahydrofolate (THF) serving as the one-carbon carrier. This reaction serves as the major source of one-carbon groups required for the biosynthesis of purines, thymidylate, methionine, and other important biomolecules. Also exhibits THF-independent aldolase activity toward beta-hydroxyamino acids, producing glycine and aldehydes, via a retro-aldol mechanism. This chain is Serine hydroxymethyltransferase 2, found in Burkholderia lata (strain ATCC 17760 / DSM 23089 / LMG 22485 / NCIMB 9086 / R18194 / 383).